A 426-amino-acid chain; its full sequence is Serine--tRNA ligase (426 aa).

Residues K36 to E66 form a disordered region. Over residues D46 to S55 the composition is skewed to polar residues. An L-serine-binding site is contributed by T233–E235. Residue R264 to E266 participates in ATP binding. Position 287 (E287) interacts with L-serine. E351 to S354 serves as a coordination point for ATP. S387 contacts L-serine.

It belongs to the class-II aminoacyl-tRNA synthetase family. Type-1 seryl-tRNA synthetase subfamily. As to quaternary structure, homodimer. The tRNA molecule binds across the dimer.

It localises to the cytoplasm. It carries out the reaction tRNA(Ser) + L-serine + ATP = L-seryl-tRNA(Ser) + AMP + diphosphate + H(+). It catalyses the reaction tRNA(Sec) + L-serine + ATP = L-seryl-tRNA(Sec) + AMP + diphosphate + H(+). Its pathway is aminoacyl-tRNA biosynthesis; selenocysteinyl-tRNA(Sec) biosynthesis; L-seryl-tRNA(Sec) from L-serine and tRNA(Sec): step 1/1. Catalyzes the attachment of serine to tRNA(Ser). Is also able to aminoacylate tRNA(Sec) with serine, to form the misacylated tRNA L-seryl-tRNA(Sec), which will be further converted into selenocysteinyl-tRNA(Sec). The sequence is that of Serine--tRNA ligase from Francisella tularensis subsp. holarctica (strain FTNF002-00 / FTA).